The following is a 298-amino-acid chain: Inosose dehydratase (298 aa).

This sequence belongs to the IolE/MocC family. Glutathione is required as a cofactor. Requires Co(2+) as cofactor. The cofactor is Mn(2+).

It carries out the reaction scyllo-inosose = 3D-3,5/4-trihydroxycyclohexane-1,2-dione + H2O. It participates in polyol metabolism; myo-inositol degradation into acetyl-CoA; acetyl-CoA from myo-inositol: step 2/7. Its function is as follows. Catalyzes the dehydration of inosose (2-keto-myo-inositol, 2KMI or 2,4,6/3,5-pentahydroxycyclohexanone) to 3D-(3,5/4)-trihydroxycyclohexane-1,2-dione (D-2,3-diketo-4-deoxy-epi-inositol). The polypeptide is Inosose dehydratase (Clostridium botulinum (strain Eklund 17B / Type B)).